The sequence spans 61 residues: Small ribosomal subunit protein uS14B (61 aa).

Residues Cys-24, Cys-27, Cys-40, and Cys-43 each coordinate Zn(2+).

Belongs to the universal ribosomal protein uS14 family. Zinc-binding uS14 subfamily. As to quaternary structure, part of the 30S ribosomal subunit. Contacts proteins S3 and S10. It depends on Zn(2+) as a cofactor.

Binds 16S rRNA, required for the assembly of 30S particles and may also be responsible for determining the conformation of the 16S rRNA at the A site. The sequence is that of Small ribosomal subunit protein uS14B from Pediococcus pentosaceus (strain ATCC 25745 / CCUG 21536 / LMG 10740 / 183-1w).